We begin with the raw amino-acid sequence, 327 residues long: Malate dehydrogenase (327 aa).

NAD(+) is bound by residues 20–25 (GAGRVG) and Asp-44. The substrate site is built by Arg-93 and Arg-99. Residues Asn-106 and 129–131 (VTN) each bind NAD(+). Residues Asn-131 and Arg-162 each coordinate substrate. Catalysis depends on His-186, which acts as the Proton acceptor.

This sequence belongs to the LDH/MDH superfamily. MDH type 3 family.

The catalysed reaction is (S)-malate + NAD(+) = oxaloacetate + NADH + H(+). Functionally, catalyzes the reversible oxidation of malate to oxaloacetate. This is Malate dehydrogenase from Nostoc punctiforme (strain ATCC 29133 / PCC 73102).